The following is a 145-amino-acid chain: Leghemoglobin (145 aa).

Positions Gly-3 to Phe-145 constitute a Globin domain. A nitrated tyrosine mark is found at Tyr-26 and Tyr-31. His-62 serves as a coordination point for O2. Residues Lys-65, His-93, and Lys-96 each contribute to the heme b site. The residue at position 134 (Tyr-134) is a Nitrated tyrosine.

This sequence belongs to the plant globin family. In terms of assembly, monomer. Post-translationally, nitrated in effective nodules and particularly in hypoxic conditions; this mechanism may play a protective role in the symbiosis by buffering toxic peroxynitrite NO(2)(-). Nitration level decrease during nodule senescence. Root nodules.

Its subcellular location is the cytoplasm. It is found in the cytosol. It localises to the nucleus. In terms of biological role, leghemoglobin that reversibly binds oxygen O(2) through a pentacoordinated heme iron. In root nodules, facilitates the diffusion of oxygen to the bacteroids while preventing the bacterial nitrogenase from being inactivated by buffering dioxygen, nitric oxide and carbon monoxide, and promoting the formation of reactive oxygen species (ROS, e.g. H(2)O(2)). This role is essential for symbiotic nitrogen fixation (SNF). This is Leghemoglobin from Psophocarpus tetragonolobus (Winged bean).